The following is a 210-amino-acid chain: Outer-membrane lipoprotein LolB (210 aa).

The first 26 residues, methionine 1–serine 26, serve as a signal peptide directing secretion. Cysteine 27 carries the N-palmitoyl cysteine lipid modification. Residue cysteine 27 is the site of S-diacylglycerol cysteine attachment.

The protein belongs to the LolB family. Monomer.

The protein resides in the cell outer membrane. Plays a critical role in the incorporation of lipoproteins in the outer membrane after they are released by the LolA protein. In Francisella tularensis subsp. holarctica (strain FTNF002-00 / FTA), this protein is Outer-membrane lipoprotein LolB.